A 282-amino-acid polypeptide reads, in one-letter code: Phosphatidylglycerol--prolipoprotein diacylglyceryl transferase (282 aa).

3 helical membrane-spanning segments follow: residues 19 to 39, 58 to 78, and 104 to 124; these read IGPFAIRWYALAYICGIVFGW, ISLVQVDDFILWVTLGIILGG, and GGMSFHGGFLGCVVAVMWFAY. R149 is a binding site for a 1,2-diacyl-sn-glycero-3-phospho-(1'-sn-glycerol). The next 3 membrane-spanning stretches (helical) occupy residues 190-210, 214-234, and 250-270; these read AGMEGILLFTVLAIMIRLGAL, GMILGAFILIYGLTRIAGEHF, and MGMLLSIPMLIVGLILIVLAI.

This sequence belongs to the Lgt family.

It is found in the cell inner membrane. The enzyme catalyses L-cysteinyl-[prolipoprotein] + a 1,2-diacyl-sn-glycero-3-phospho-(1'-sn-glycerol) = an S-1,2-diacyl-sn-glyceryl-L-cysteinyl-[prolipoprotein] + sn-glycerol 1-phosphate + H(+). The protein operates within protein modification; lipoprotein biosynthesis (diacylglyceryl transfer). Catalyzes the transfer of the diacylglyceryl group from phosphatidylglycerol to the sulfhydryl group of the N-terminal cysteine of a prolipoprotein, the first step in the formation of mature lipoproteins. In Bradyrhizobium diazoefficiens (strain JCM 10833 / BCRC 13528 / IAM 13628 / NBRC 14792 / USDA 110), this protein is Phosphatidylglycerol--prolipoprotein diacylglyceryl transferase.